We begin with the raw amino-acid sequence, 281 residues long: Phosphonates import ATP-binding protein PhnC 2 (281 aa).

The 235-residue stretch at 4 to 238 (LTVDNVTKTY…LVDDLYGNVE (235 aa)) folds into the ABC transporter domain. 35–42 (GESGAGKS) lines the ATP pocket. Residues 243 to 281 (ATDNSDNSTVDTSDGTRYDTETGSDGTDEVDVIGRQVES) form a disordered region. The segment covering 244 to 255 (TDNSDNSTVDTS) has biased composition (low complexity).

This sequence belongs to the ABC transporter superfamily. Phosphonates importer (TC 3.A.1.9.1) family. As to quaternary structure, the complex is composed of two ATP-binding proteins (PhnC), two transmembrane proteins (PhnE) and a solute-binding protein (PhnD).

It localises to the cell membrane. It carries out the reaction phosphonate(out) + ATP + H2O = phosphonate(in) + ADP + phosphate + H(+). Its function is as follows. Part of the ABC transporter complex PhnCDE involved in phosphonates import. Responsible for energy coupling to the transport system. This Haloquadratum walsbyi (strain DSM 16790 / HBSQ001) protein is Phosphonates import ATP-binding protein PhnC 2.